Consider the following 953-residue polypeptide: Translation initiation factor IF-2 (953 aa).

Disordered regions lie at residues 51-242 and 279-363; these read SKAS…QEAK and TKLK…TERK. 2 stretches are compositionally biased toward basic and acidic residues: residues 80 to 89 and 98 to 111; these read TGSEHVEKTQ and FKAE…EQAA. Over residues 131–140 the composition is skewed to polar residues; the sequence is QPNNHQTNEQ. The segment covering 149-188 has biased composition (basic and acidic residues); it reads SQGDTNDKRIERKASNVSPRHDNHQLVGDRNRSFAKENHK. Residues 191–207 show a composition bias toward polar residues; that stretch reads RFTNQKKQGRQEPQSKS. Residues 229–242 are compositionally biased toward basic and acidic residues; that stretch reads RQSETRFRAQQEAK. A compositionally biased stretch (polar residues) spans 282–291; sequence KSSNISAKST. Over residues 300 to 317 the composition is skewed to basic and acidic residues; the sequence is ARPEKNRELTHHSQEGQK. A compositionally biased stretch (low complexity) spans 322 to 338; it reads SWNSQNQVRNQKNSNWN. Residues 339-348 show a composition bias toward basic residues; it reads KNKKTKKGKN. The 170-residue stretch at 454–623 folds into the tr-type G domain; the sequence is ERAPVVTIMG…LLVAEVEELK (170 aa). A G1 region spans residues 463–470; the sequence is GHVDHGKT. 463-470 is a binding site for GTP; sequence GHVDHGKT. Positions 488–492 are G2; it reads GITQH. The tract at residues 509-512 is G3; that stretch reads DTPG. GTP-binding positions include 509-513 and 563-566; these read DTPGH and NKID. Residues 563-566 are G4; the sequence is NKID. Residues 599-601 are G5; that stretch reads SAK.

The protein belongs to the TRAFAC class translation factor GTPase superfamily. Classic translation factor GTPase family. IF-2 subfamily.

It localises to the cytoplasm. In terms of biological role, one of the essential components for the initiation of protein synthesis. Protects formylmethionyl-tRNA from spontaneous hydrolysis and promotes its binding to the 30S ribosomal subunits. Also involved in the hydrolysis of GTP during the formation of the 70S ribosomal complex. This Streptococcus pyogenes serotype M49 (strain NZ131) protein is Translation initiation factor IF-2.